We begin with the raw amino-acid sequence, 244 residues long: Uridylate kinase (244 aa).

16-19 serves as a coordination point for ATP; it reads KLSG. Residue G58 participates in UMP binding. Residues G59 and R63 each coordinate ATP. Residues D78 and 139 to 146 each bind UMP; that span reads VGAPYFTT. ATP is bound by residues T166, Y172, and D175.

Belongs to the UMP kinase family. Homohexamer.

The protein localises to the cytoplasm. It carries out the reaction UMP + ATP = UDP + ADP. The protein operates within pyrimidine metabolism; CTP biosynthesis via de novo pathway; UDP from UMP (UMPK route): step 1/1. With respect to regulation, inhibited by UTP. Its function is as follows. Catalyzes the reversible phosphorylation of UMP to UDP. The sequence is that of Uridylate kinase from Novosphingobium aromaticivorans (strain ATCC 700278 / DSM 12444 / CCUG 56034 / CIP 105152 / NBRC 16084 / F199).